Consider the following 520-residue polypeptide: Ribonuclease Y (520 aa).

Residues 3 to 23 (IEIQWIGIGAAFLVGAIGGAL) traverse the membrane as a helical segment. A KH domain is found at 210 to 273 (AVSVVPLPND…EVARLALERL (64 aa)). An HD domain is found at 336-429 (VLQHSIEVAF…VQAADALSGA (94 aa)).

Belongs to the RNase Y family.

The protein resides in the cell membrane. In terms of biological role, endoribonuclease that initiates mRNA decay. The sequence is that of Ribonuclease Y from Syntrophotalea carbinolica (strain DSM 2380 / NBRC 103641 / GraBd1) (Pelobacter carbinolicus).